Consider the following 199-residue polypeptide: Patulin biosynthesis cluster protein F (199 aa).

An N-terminal signal peptide occupies residues 1-21 (MKSSLWVSLAVSLIGLGPAAA). N-linked (GlcNAc...) asparagine glycans are attached at residues Asn-129 and Asn-183.

The protein belongs to the patF family.

The protein localises to the cytoplasm. Its subcellular location is the cytosol. It catalyses the reaction phyllostine = neopatulin. It participates in mycotoxin biosynthesis; patulin biosynthesis. Part of the gene cluster that mediates the biosynthesis of patulin, an acetate-derived tetraketide mycotoxin produced by several fungal species that shows antimicrobial properties against several bacteria. PatF catalyzes the conversion of phyllostine into neopatulin. The pathway begins with the synthesis of 6-methylsalicylic acid by the polyketide synthase (PKS) patK via condensation of acetate and malonate units. The 6-methylsalicylic acid decarboxylase patG then catalyzes the decarboxylation of 6-methylsalicylic acid to yield m-cresol (also known as 3-methylphenol). These first reactions occur in the cytosol. The intermediate m-cresol is then transported into the endoplasmic reticulum where the cytochrome P450 monooxygenase patH converts it to m-hydroxybenzyl alcohol, which is further converted to gentisyl alcohol by the cytochrome P450 monooxygenase patI. The oxidoreductases patJ and patO further convert gentisyl alcohol to isoepoxydon in the vacuole. PatN catalyzes then the transformation of isoepoxydon into phyllostine. The cluster protein patF is responsible for the conversion from phyllostine to neopatulin whereas the alcohol dehydrogenase patD converts neopatulin to E-ascladiol. The steps between isoepoxydon and E-ascladiol occur in the cytosol, and E-ascladiol is probably secreted to the extracellular space by one of the cluster-specific transporters patC or patM. Finally, the secreted patulin synthase patE catalyzes the conversion of E-ascladiol to patulin. The chain is Patulin biosynthesis cluster protein F from Penicillium expansum (Blue mold rot fungus).